A 935-amino-acid chain; its full sequence is 2-oxoglutarate dehydrogenase E1 component (935 aa).

Belongs to the alpha-ketoglutarate dehydrogenase family. As to quaternary structure, homodimer. Part of the 2-oxoglutarate dehydrogenase (OGDH) complex composed of E1 (2-oxoglutarate dehydrogenase), E2 (dihydrolipoamide succinyltransferase) and E3 (dihydrolipoamide dehydrogenase); the complex contains multiple copies of the three enzymatic components (E1, E2 and E3). The cofactor is thiamine diphosphate.

The enzyme catalyses N(6)-[(R)-lipoyl]-L-lysyl-[protein] + 2-oxoglutarate + H(+) = N(6)-[(R)-S(8)-succinyldihydrolipoyl]-L-lysyl-[protein] + CO2. Its function is as follows. E1 component of the 2-oxoglutarate dehydrogenase (OGDH) complex which catalyzes the decarboxylation of 2-oxoglutarate, the first step in the conversion of 2-oxoglutarate to succinyl-CoA and CO(2). In Haemophilus influenzae (strain ATCC 51907 / DSM 11121 / KW20 / Rd), this protein is 2-oxoglutarate dehydrogenase E1 component (sucA).